Consider the following 314-residue polypeptide: Prohormone-3 (314 aa).

A signal peptide spans 1–19; it reads MGRVLLSASSLLLHIQVFT. Residues 90 to 112 traverse the membrane as a helical segment; it reads YTCVALTVVALVSTMHFGVEAWG.

The protein resides in the membrane. The protein is Prohormone-3 of Apis mellifera (Honeybee).